Here is a 397-residue protein sequence, read N- to C-terminus: Teichoic acid D-alanine hydrolase (397 aa).

The first 23 residues, 1–23 (MKFNKVKLVIHACVLLFIIISIA), serve as a signal peptide directing secretion.

The protein localises to the cell membrane. The catalysed reaction is [(4-D-Ala)-(2-GlcNAc)-Rib-ol-P]n-[Gro-P]m-beta-D-ManNAc-(1-&gt;4)-alpha-D-GlcNAc-P-peptidoglycan + n H2O = [(2-GlcNAc)-Rib-ol-P]n-[Gro-P]m-beta-D-ManNAc-(1-&gt;4)-alpha-D-GlcNAc-P-peptidoglycan + n D-alanine.. In terms of biological role, catalyzes the liberation of D-alanyl moieties present on wall teichoic acid (WTA) and lipoteichoic acid (LTA). Affects the methicillin resistance level and autolysis in the presence of Triton X-100 as well as the cell wall structure. In Staphylococcus aureus (strain NCTC 8325 / PS 47), this protein is Teichoic acid D-alanine hydrolase (fmtA).